The following is a 371-amino-acid chain: Transcription factor bHLH77 (371 aa).

Disordered stretches follow at residues Met-1–Gly-25, Ser-65–Glu-206, and Gln-352–Pro-371. A compositionally biased stretch (polar residues) spans Ser-85–Ser-96. Low complexity predominate over residues Ser-128–Ser-142. Residues Gly-165 to His-190 are compositionally biased toward basic and acidic residues. One can recognise a bHLH domain in the interval Gln-197–Leu-247.

As to quaternary structure, homodimer. Interacts with IBH1. Expressed constitutively in roots, leaves, stems, and flowers.

It localises to the nucleus. This chain is Transcription factor bHLH77 (BHLH77), found in Arabidopsis thaliana (Mouse-ear cress).